Here is a 107-residue protein sequence, read N- to C-terminus: Iron-sulfur cluster assembly protein CyaY (107 aa).

The protein belongs to the frataxin family.

Its function is as follows. Involved in iron-sulfur (Fe-S) cluster assembly. May act as a regulator of Fe-S biogenesis. The protein is Iron-sulfur cluster assembly protein CyaY of Edwardsiella ictaluri (strain 93-146).